The following is a 688-amino-acid chain: Elongation factor G (688 aa).

The tr-type G domain maps to 8 to 282 (DKFRNFGIMA…GVVDYLPSPL (275 aa)). Residues 17-24 (AHIDAGKT), 81-85 (DTPGH), and 135-138 (NKMD) contribute to the GTP site.

Belongs to the TRAFAC class translation factor GTPase superfamily. Classic translation factor GTPase family. EF-G/EF-2 subfamily.

The protein resides in the cytoplasm. In terms of biological role, catalyzes the GTP-dependent ribosomal translocation step during translation elongation. During this step, the ribosome changes from the pre-translocational (PRE) to the post-translocational (POST) state as the newly formed A-site-bound peptidyl-tRNA and P-site-bound deacylated tRNA move to the P and E sites, respectively. Catalyzes the coordinated movement of the two tRNA molecules, the mRNA and conformational changes in the ribosome. The protein is Elongation factor G of Clostridium botulinum (strain Alaska E43 / Type E3).